The primary structure comprises 421 residues: UDP-N-acetylglucosamine 1-carboxyvinyltransferase (421 aa).

Residue 22 to 23 (KN) coordinates phosphoenolpyruvate. Residue R91 coordinates UDP-N-acetyl-alpha-D-glucosamine. Residue C115 is the Proton donor of the active site. C115 is modified (2-(S-cysteinyl)pyruvic acid O-phosphothioketal). Residues 120 to 124 (RPIDL), D306, and I328 each bind UDP-N-acetyl-alpha-D-glucosamine.

This sequence belongs to the EPSP synthase family. MurA subfamily.

It is found in the cytoplasm. It catalyses the reaction phosphoenolpyruvate + UDP-N-acetyl-alpha-D-glucosamine = UDP-N-acetyl-3-O-(1-carboxyvinyl)-alpha-D-glucosamine + phosphate. It functions in the pathway cell wall biogenesis; peptidoglycan biosynthesis. Functionally, cell wall formation. Adds enolpyruvyl to UDP-N-acetylglucosamine. The chain is UDP-N-acetylglucosamine 1-carboxyvinyltransferase from Methylacidiphilum infernorum (isolate V4) (Methylokorus infernorum (strain V4)).